Here is a 440-residue protein sequence, read N- to C-terminus: Phosphoglucosamine mutase (440 aa).

The active-site Phosphoserine intermediate is the serine 97. Positions 97, 237, 239, and 241 each coordinate Mg(2+). Serine 97 is modified (phosphoserine).

The protein belongs to the phosphohexose mutase family. Mg(2+) serves as cofactor. In terms of processing, activated by phosphorylation.

The catalysed reaction is alpha-D-glucosamine 1-phosphate = D-glucosamine 6-phosphate. Catalyzes the conversion of glucosamine-6-phosphate to glucosamine-1-phosphate. This chain is Phosphoglucosamine mutase, found in Nautilia profundicola (strain ATCC BAA-1463 / DSM 18972 / AmH).